The sequence spans 530 residues: PTS system maltose-specific EIICB component (530 aa).

In terms of domain architecture, PTS EIIC type-1 spans 1 to 431 (MTAKTAPKVT…FNLKTPGRDS (431 aa)). Helical transmembrane passes span 22–42 (FMLPVALLSFCGIMLGIGSSL), 69–89 (IGSFAFSFLPVMFCIAIPLGL), 96–116 (VAAFAGFIGYAVMNLAVNFWL), 138–158 (ILGIQSIDTGILGAVIAGIIV), 189–209 (LVMGLVGLVIPLVWPIFAMGI), 289–309 (FLSQGKMPAFLGGLPGAALAM), 321–341 (IKGLLISGLIACVVGGTTEPL), 343–363 (FLFLFVAPVLYVIHALLTGLG), 369–389 (VLGVTIGNTDGNIIDFVVFGI), and 399–419 (MVPVVAAIWFVVYYVIFRFAI). The PTS EIIB type-1 domain occupies 449–530 (GYNVPAILEA…MAGLMHTVQA (82 aa)). The active-site Phosphocysteine intermediate; for EIIB activity is C471.

It localises to the cell inner membrane. The catalysed reaction is D-maltose(out) + N(pros)-phospho-L-histidyl-[protein] = alpha-maltose 6'-phosphate(in) + L-histidyl-[protein]. Functionally, the phosphoenolpyruvate-dependent sugar phosphotransferase system (sugar PTS), a major carbohydrate active transport system, catalyzes the phosphorylation of incoming sugar substrates concomitantly with their translocation across the cell membrane. This system is involved in maltose transport. MalX can also recognize and transport glucose even though this sugar may not represent the natural substrate of the system. In Escherichia coli (strain K12), this protein is PTS system maltose-specific EIICB component.